The sequence spans 445 residues: Probable fructoselysine/psicoselysine transporter FrlA (445 aa).

The next 12 membrane-spanning stretches (helical) occupy residues 10 to 30, 38 to 58, 93 to 113, 121 to 141, 155 to 175, 181 to 201, 236 to 256, 273 to 293, 334 to 354, 355 to 375, 389 to 410, and 417 to 435; these read LGFW…GIFV, AAGT…IVIP, GWAS…LAIV, PIDP…FMLL, LITI…IFWF, AAPT…LAGI, CLLV…LMPF, IPAL…IVIL, IILQ…TSLL, GYFT…IIWC, AFGL…STFV, and LICA…AFWA.

The protein belongs to the amino acid-polyamine-organocation (APC) superfamily.

It localises to the cell inner membrane. It carries out the reaction N(6)-(D-fructosyl)-L-lysine(in) = N(6)-(D-fructosyl)-L-lysine(out). The enzyme catalyses N(6)-(D-psicosyl)-L-lysine(in) = N(6)-(D-psicosyl)-L-lysine(out). It functions in the pathway carbohydrate metabolism; fructoselysine degradation. Is likely involved in the transport of fructoselysine and psicoselysine to the cytoplasm, where they are degraded. The polypeptide is Probable fructoselysine/psicoselysine transporter FrlA (Escherichia coli (strain K12)).